The following is a 636-amino-acid chain: Molybdenum cofactor biosynthesis protein 1 (636 aa).

The tract at residues 1-383 is molybdenum cofactor biosynthesis protein A; that stretch reads MAARPLSRML…QMKNRPMILI (383 aa). Serine 64 is modified (phosphoserine). A Radical SAM core domain is found at 64 to 277; sequence SFGRQHSYLR…LDTVRQQWPE (214 aa). Residue arginine 73 participates in GTP binding. 2 residues coordinate [4Fe-4S] cluster: cysteine 80 and cysteine 84. Residue tyrosine 86 coordinates S-adenosyl-L-methionine. Residue cysteine 87 coordinates [4Fe-4S] cluster. Arginine 123 provides a ligand contact to GTP. Glycine 127 serves as a coordination point for S-adenosyl-L-methionine. Threonine 154 provides a ligand contact to GTP. Serine 178 lines the S-adenosyl-L-methionine pocket. Lysine 198 is subject to N6-acetyllysine. A GTP-binding site is contributed by lysine 215. Methionine 249 contributes to the S-adenosyl-L-methionine binding site. Positions 312 and 315 each coordinate [4Fe-4S] cluster. GTP is bound at residue 317–319; that stretch reads RLR. Cysteine 329 contacts [4Fe-4S] cluster. The molybdenum cofactor biosynthesis protein C stretch occupies residues 414–636; the sequence is MSFSSQVATL…GGQRGDFHRA (223 aa). The interval 456–480 is disordered; it reads DANSKCLSPGSWASAAPSGPQLTSE. A compositionally biased stretch (low complexity) spans 463-475; sequence SPGSWASAAPSGP. An N6-acetyllysine modification is found at lysine 528. Residue aspartate 606 is the For molybdenum cofactor biosynthesis protein C activity of the active site.

The protein in the C-terminal section; belongs to the MoaC family. In the N-terminal section; belongs to the radical SAM superfamily. MoaA family. Isoform MOCS1A and isoform MOCS1B probably form a heterooligomer. Requires [4Fe-4S] cluster as cofactor. In terms of tissue distribution, isoform MOCS1A and isoform 2 are widely expressed.

The enzyme catalyses GTP + AH2 + S-adenosyl-L-methionine = (8S)-3',8-cyclo-7,8-dihydroguanosine 5'-triphosphate + 5'-deoxyadenosine + L-methionine + A + H(+). It catalyses the reaction (8S)-3',8-cyclo-7,8-dihydroguanosine 5'-triphosphate = cyclic pyranopterin phosphate + diphosphate. The protein operates within cofactor biosynthesis; molybdopterin biosynthesis. In terms of biological role, isoform MOCS1A and isoform MOCS1B probably form a complex that catalyzes the conversion of 5'-GTP to cyclic pyranopterin monophosphate (cPMP). MOCS1A catalyzes the cyclization of GTP to (8S)-3',8-cyclo-7,8-dihydroguanosine 5'-triphosphate and MOCS1B catalyzes the subsequent conversion of (8S)-3',8-cyclo-7,8-dihydroguanosine 5'-triphosphate to cPMP. The sequence is that of Molybdenum cofactor biosynthesis protein 1 (MOCS1) from Homo sapiens (Human).